The following is a 766-amino-acid chain: MALAHTLGFPRIGRDRELKKAQEAFWKGELDEAGLRAVGRQLRAAHWQVQKDAGIQLLPVGDFAWYDQVLTHSLTFGVIPERFRAHGEAGPTLHTLFGMARGVSDDSCCGGAHAQEMTKWFDTNYHYLVPEFSADQQFQLSWEQLFEEVDEARALGHQVKPVLIGPLTYLWLGKGKGAEFDRLDLLDRLLPLYGQILRRLAGQGVEWVQIDEPILVLDLPQAWKNAFERAYNLLQSEPLKKLVATYFGGLEDNLGLAANLPVDGLHIDLVRAPEQYPSILDRLPAYKVVSLGLVNGRNVWRCDLEKALEVVRHARERLGERLWVAPSCSLLHSPVDLEREDGLDAELKSWLAFAVQKCREVAVLARAATEPEAAEVLAALEESRAVQASRASSPRIHKPAVQARLAAIKASDAQRRSPFAERIARQRAGLDLPAFPTTTIGSFPQTSSIRLARQSFKQGKLSEAEYIEAMHSEIRHAVQIQEQLGLDVLVHGEAERNDMVEYFAEQLDGYVFTRFGWVQSYGSRCVKPAVIYGDLSRPRAMTVEWIRYAQSLTDKVMKGMLTGPVTMLMWSFPREDVSREVQARQLALAIRDEVVDLEAAGIRIVQIDEAAFREGLPLRRNAWPHYLEWATEAFRLCASGVRDETQIHTHMCYSEFNDVIESIAAMDADVITIETSRSDMELLEAFEQFDYPNEIGPGVYDIHSPRVPSREEIVALLRKAARRIPAERLWVNPDCGLKTRAWPETEAALVNMVAAARELRGDLARG.

5-methyltetrahydropteroyltri-L-glutamate contacts are provided by residues 16–19 and Lys-119; that span reads RELK. L-homocysteine-binding positions include 440 to 442 and Glu-493; that span reads IGS. Residues 440–442 and Glu-493 contribute to the L-methionine site; that span reads IGS. Residues 524 to 525 and Trp-570 each bind 5-methyltetrahydropteroyltri-L-glutamate; that span reads RC. Asp-608 serves as a coordination point for L-homocysteine. Asp-608 provides a ligand contact to L-methionine. Residue Glu-614 coordinates 5-methyltetrahydropteroyltri-L-glutamate. Zn(2+)-binding residues include His-650, Cys-652, and Glu-674. His-703 functions as the Proton donor in the catalytic mechanism. Cys-735 contributes to the Zn(2+) binding site.

The protein belongs to the vitamin-B12 independent methionine synthase family. It depends on Zn(2+) as a cofactor.

It carries out the reaction 5-methyltetrahydropteroyltri-L-glutamate + L-homocysteine = tetrahydropteroyltri-L-glutamate + L-methionine. The protein operates within amino-acid biosynthesis; L-methionine biosynthesis via de novo pathway; L-methionine from L-homocysteine (MetE route): step 1/1. In terms of biological role, catalyzes the transfer of a methyl group from 5-methyltetrahydrofolate to homocysteine resulting in methionine formation. In Pseudomonas aeruginosa (strain LESB58), this protein is 5-methyltetrahydropteroyltriglutamate--homocysteine methyltransferase.